The primary structure comprises 1456 residues: ABC-type transporter eriD (1456 aa).

The disordered stretch occupies residues 1 to 65 (MAENEKVTYG…DPRMDPLSGK (65 aa)). A compositionally biased stretch (polar residues) spans 30–40 (SMTNASRSSVY). Residues 118–372 (LDIPGLARDI…FIDMGFECPP (255 aa)) enclose the ABC transporter 1 domain. A run of 6 helical transmembrane segments spans residues 481-501 (NFLT…SIFY), 515-535 (ALLF…ILQI), 561-581 (VLCD…VLYF), 590-610 (GAFF…SMIF), 623-643 (AMAP…FTIP), and 734-754 (ILFG…EFIA). The segment at 775 to 799 (EGASEDEEAGTGSTGTRTQEEPVDK) is disordered. In terms of domain architecture, ABC transporter 2 spans 813 to 1056 (FHWEDVIYDI…IIDYFEGQGA (244 aa)). 849-856 (GASGAGKT) contributes to the ATP binding site. Transmembrane regions (helical) follow at residues 1148-1168 (YIYS…FSFF), 1184-1204 (VFMG…HFVT), 1233-1253 (LPWN…PVGM), 1269-1289 (LMFL…HMLI), 1301-1321 (IASL…GPSG), 1337-1357 (PFTY…PAFC), and 1423-1443 (FGFL…FYWL).

It belongs to the ABC transporter superfamily. ABCG family. PDR (TC 3.A.1.205) subfamily.

It is found in the membrane. Functionally, ABC-type transporter; part of the gene cluster that mediates the biosynthesis of erinacines, cyathane-xylosides that show unique biological activities, including leishmanicidal activity, stimulating activity for nerve growth-factor synthesis, and agonistic activity toward the kappa opioid receptor. The protein is ABC-type transporter eriD of Hericium erinaceus (Lion's mane mushroom).